Reading from the N-terminus, the 145-residue chain is Ribosomal RNA large subunit methyltransferase H (145 aa).

S-adenosyl-L-methionine-binding positions include Leu-64, Gly-93, and 112-117; that span reads LSPLTF.

This sequence belongs to the RNA methyltransferase RlmH family. As to quaternary structure, homodimer.

Its subcellular location is the cytoplasm. It catalyses the reaction pseudouridine(1915) in 23S rRNA + S-adenosyl-L-methionine = N(3)-methylpseudouridine(1915) in 23S rRNA + S-adenosyl-L-homocysteine + H(+). Functionally, specifically methylates the pseudouridine at position 1915 (m3Psi1915) in 23S rRNA. The sequence is that of Ribosomal RNA large subunit methyltransferase H from Prochlorococcus marinus (strain MIT 9211).